An 82-amino-acid polypeptide reads, in one-letter code: Sec-independent protein translocase protein TatA (82 aa).

The chain crosses the membrane as a helical span at residues 1–21 (MLGFGPFELILIVVIIALLFG). Residues 36-47 (IKEFKQEMHEPS) are compositionally biased toward basic and acidic residues. The tract at residues 36 to 82 (IKEFKQEMHEPSPPRPQVTDIPSQRLDPVTGAPVSTESTVPASDRRS) is disordered.

This sequence belongs to the TatA/E family. In terms of assembly, forms a complex with TatC.

Its subcellular location is the cell membrane. Its function is as follows. Part of the twin-arginine translocation (Tat) system that transports large folded proteins containing a characteristic twin-arginine motif in their signal peptide across membranes. TatA could form the protein-conducting channel of the Tat system. The protein is Sec-independent protein translocase protein TatA of Deinococcus deserti (strain DSM 17065 / CIP 109153 / LMG 22923 / VCD115).